The following is a 248-amino-acid chain: Large ribosomal subunit protein bL9m (248 aa).

The transit peptide at 1–25 directs the protein to the mitochondrion; it reads MLKNIYVTPLNLLKSATSLQQQVRT.

Belongs to the bacterial ribosomal protein bL9 family. In terms of assembly, component of the mitochondrial ribosome large subunit (39S) which comprises a 16S rRNA and about 50 distinct proteins.

The protein localises to the mitochondrion. The protein is Large ribosomal subunit protein bL9m (mRpL9) of Drosophila melanogaster (Fruit fly).